A 125-amino-acid chain; its full sequence is Small ribosomal subunit protein uS12 (125 aa).

The segment at 9 to 31 (RQGREVEKIKSKSPAMENSPQRR) is disordered. Residue Asp89 is modified to 3-methylthioaspartic acid.

Belongs to the universal ribosomal protein uS12 family. Part of the 30S ribosomal subunit. Contacts proteins S8 and S17. May interact with IF1 in the 30S initiation complex.

In terms of biological role, with S4 and S5 plays an important role in translational accuracy. Functionally, interacts with and stabilizes bases of the 16S rRNA that are involved in tRNA selection in the A site and with the mRNA backbone. Located at the interface of the 30S and 50S subunits, it traverses the body of the 30S subunit contacting proteins on the other side and probably holding the rRNA structure together. The combined cluster of proteins S8, S12 and S17 appears to hold together the shoulder and platform of the 30S subunit. This is Small ribosomal subunit protein uS12 from Verminephrobacter eiseniae (strain EF01-2).